The chain runs to 836 residues: Lon protease (836 aa).

The Lon N-terminal domain occupies 41 to 233 (LPVLPLRNTV…RLIHFLNREV (193 aa)). ATP is bound at residue 385–392 (GPPGVGKT). The Lon proteolytic domain maps to 627–811 (VMLSGVAVGL…DDLIDYVLEP (185 aa)). Catalysis depends on residues serine 714 and lysine 757. The segment at 816–836 (APQFKVEDKDHTPETTGNESE) is disordered.

This sequence belongs to the peptidase S16 family. Homohexamer. Organized in a ring with a central cavity.

The protein resides in the cytoplasm. It catalyses the reaction Hydrolysis of proteins in presence of ATP.. Functionally, ATP-dependent serine protease that mediates the selective degradation of mutant and abnormal proteins as well as certain short-lived regulatory proteins. Required for cellular homeostasis and for survival from DNA damage and developmental changes induced by stress. Degrades polypeptides processively to yield small peptide fragments that are 5 to 10 amino acids long. Binds to DNA in a double-stranded, site-specific manner. The protein is Lon protease of Chloroherpeton thalassium (strain ATCC 35110 / GB-78).